We begin with the raw amino-acid sequence, 332 residues long: Biotin synthase (332 aa).

In terms of domain architecture, Radical SAM core spans 52-282; sequence FPENEVEFCS…KAELRLCGGR (231 aa). The [4Fe-4S] cluster site is built by C70, C74, and C77. Positions 114, 147, 207, and 277 each coordinate [2Fe-2S] cluster.

The protein belongs to the radical SAM superfamily. Biotin synthase family. Homodimer. It depends on [4Fe-4S] cluster as a cofactor. The cofactor is [2Fe-2S] cluster.

It catalyses the reaction (4R,5S)-dethiobiotin + (sulfur carrier)-SH + 2 reduced [2Fe-2S]-[ferredoxin] + 2 S-adenosyl-L-methionine = (sulfur carrier)-H + biotin + 2 5'-deoxyadenosine + 2 L-methionine + 2 oxidized [2Fe-2S]-[ferredoxin]. Its pathway is cofactor biosynthesis; biotin biosynthesis; biotin from 7,8-diaminononanoate: step 2/2. Functionally, catalyzes the conversion of dethiobiotin (DTB) to biotin by the insertion of a sulfur atom into dethiobiotin via a radical-based mechanism. This chain is Biotin synthase, found in Aquifex aeolicus (strain VF5).